Here is a 244-residue protein sequence, read N- to C-terminus: Tubulin-folding cofactor B (244 aa).

Met-1 bears the N-acetylmethionine mark. Ser-65 carries the post-translational modification Phosphoserine; by PAK1. Residue Tyr-98 is modified to Phosphotyrosine. Position 110 is a phosphoserine (Ser-110). Ser-128 carries the phosphoserine; by PAK1 modification. The CAP-Gly domain occupies 183-225; the sequence is GLTDFKPGYWVGVRYDEPLGKNDGSVNGKRYFECQAKYGAFVK. An N6-acetyllysine modification is found at Lys-219.

The protein belongs to the TBCB family. In terms of assembly, supercomplex made of cofactors A to E. Cofactors A and D function by capturing and stabilizing tubulin in a quasi-native conformation. Cofactor E binds to the cofactor D-tubulin complex; interaction with cofactor C then causes the release of tubulin polypeptides that are committed to the native state. Cofactors B and E can form a heterodimer which binds to alpha-tubulin and enhances their ability to dissociate tubulin heterodimers. Interacts with GAN. Interacts with DCTN1. Phosphorylation by PAK1 is required for normal function. In terms of processing, ubiquitinated in the presence of GAN which targets it for degradation by the proteasome. Widely expressed with highest levels in brain. Broadly distributed throughout the neonate brain but restricted mainly to ependymary cells in the adult brain where it is concentrated in the cilia.

The protein resides in the cytoplasm. Its subcellular location is the cytoskeleton. Binds to alpha-tubulin folding intermediates after their interaction with cytosolic chaperonin in the pathway leading from newly synthesized tubulin to properly folded heterodimer. Involved in regulation of tubulin heterodimer dissociation. May function as a negative regulator of axonal growth. The protein is Tubulin-folding cofactor B (Tbcb) of Mus musculus (Mouse).